A 394-amino-acid chain; its full sequence is Elongation factor Tu (394 aa).

Positions 10–204 constitute a tr-type G domain; that stretch reads KPHVNVGTIG…HLDTYIPEPE (195 aa). Positions 19–26 are G1; it reads GHVDHGKT. 19 to 26 lines the GTP pocket; sequence GHVDHGKT. Thr26 contacts Mg(2+). Residues 60–64 are G2; that stretch reads GITIN. The segment at 81 to 84 is G3; the sequence is DCPG. Residues 81-85 and 136-139 each bind GTP; these read DCPGH and NKCD. The segment at 136 to 139 is G4; sequence NKCD. Residues 174–176 are G5; that stretch reads SAL.

Belongs to the TRAFAC class translation factor GTPase superfamily. Classic translation factor GTPase family. EF-Tu/EF-1A subfamily. In terms of assembly, monomer.

The protein resides in the cytoplasm. The enzyme catalyses GTP + H2O = GDP + phosphate + H(+). In terms of biological role, GTP hydrolase that promotes the GTP-dependent binding of aminoacyl-tRNA to the A-site of ribosomes during protein biosynthesis. This is Elongation factor Tu from Aeromonas hydrophila subsp. hydrophila (strain ATCC 7966 / DSM 30187 / BCRC 13018 / CCUG 14551 / JCM 1027 / KCTC 2358 / NCIMB 9240 / NCTC 8049).